The primary structure comprises 1303 residues: Latent-transforming growth factor beta-binding protein 3 (1303 aa).

The N-terminal stretch at 1–43 (MPGPRGAAGGLAPEMRGAGAAGLLALLLLLLLLLLGLGGRVEG) is a signal peptide. Asn-89 carries N-linked (GlcNAc...) asparagine glycosylation. The 33-residue stretch at 109 to 141 (RVVVCPLPCMNGGQCSSRNQCLCPPDFTGRFCQ) folds into the EGF-like 1 domain. Cystine bridges form between Cys-113-Cys-123, Cys-117-Cys-129, Cys-131-Cys-140, Cys-279-Cys-303, Cys-289-Cys-316, and Cys-304-Cys-319. The disordered stretch occupies residues 247–282 (SSNAESAAPSQHLLPHPKPSHPRPPTQKPLGRCFQD). One can recognise a TB 1 domain in the interval 277 to 331 (GRCFQDTLPKQPCGSNPLPGLTKQEDCCGSIGTAWGQSKCHKCPQLQYTGVQKPG). Residue Asn-349 is glycosylated (N-linked (GlcNAc...) asparagine). An EGF-like 2; calcium-binding domain is found at 355–395 (DINECAMPGVCRHGDCLNNPGSYRCVCPPGHSLGPSRTQCI). 7 disulfides stabilise this stretch: Cys-359/Cys-370, Cys-365/Cys-379, Cys-381/Cys-394, Cys-405/Cys-428, Cys-415/Cys-440, Cys-429/Cys-443, and Cys-430/Cys-455. The region spanning 403–455 (SLCFRLVSPEHQCQHPLTTRLTRQLCCCSVGKAWGARCQRCPTDGTAAFKEIC) is the TB 2 domain. Residues 478 to 552 (FSLFLHPDGP…ISRPSPPTMR (75 aa)) form a disordered region. Low complexity predominate over residues 529–540 (PTATTTPARPYP). Residues 574-615 (ETDECRLNQNICGHGECVPGPPDYSCHCNPGYRSHPQHRYCV) enclose the EGF-like 3 domain. 37 disulfide bridges follow: Cys-578–Cys-590, Cys-585–Cys-599, Cys-601–Cys-614, Cys-620–Cys-632, Cys-625–Cys-641, Cys-664–Cys-676, Cys-670–Cys-685, Cys-687–Cys-701, Cys-748–Cys-759, Cys-754–Cys-768, Cys-770–Cys-783, Cys-789–Cys-800, Cys-795–Cys-809, Cys-811–Cys-824, Cys-830–Cys-841, Cys-836–Cys-850, Cys-852–Cys-864, Cys-870–Cys-883, Cys-877–Cys-892, Cys-894–Cys-907, Cys-919–Cys-942, Cys-929–Cys-954, Cys-943–Cys-959, Cys-944–Cys-971, Cys-997–Cys-1010, Cys-1005–Cys-1019, Cys-1021–Cys-1034, Cys-1040–Cys-1051, Cys-1046–Cys-1060, Cys-1062–Cys-1075, Cys-1086–Cys-1097, Cys-1092–Cys-1106, Cys-1108–Cys-1121, Cys-1138–Cys-1162, Cys-1148–Cys-1174, Cys-1163–Cys-1177, and Cys-1164–Cys-1186. Positions 616 to 659 (DVNECEAEPCGPGRGICMNTGGSYNCHCNRGYRLHVGAGGRSCV) constitute an EGF-like 4; calcium-binding domain. One can recognise an EGF-like 5; calcium-binding domain in the interval 660–702 (DLNECAKPHLCGDGGFCINFPGHYKCNCYPGYRLKASRPPVCE). The EGF-like 6; calcium-binding domain maps to 744–784 (DVNECAEGSPCSPGWCENLPGSFRCTCAQGYAPAPDGRSCL). The 41-residue stretch at 785–825 (DVDECEAGDVCDNGICSNTPGSFQCQCLSGYHLSRDRSHCE) folds into the EGF-like 7; calcium-binding domain. In terms of domain architecture, EGF-like 8; calcium-binding spans 826–865 (DIDECDFPAACIGGDCINTNGSYRCLCPQGHRLVGGRKCQ). Asn-845 is a glycosylation site (N-linked (GlcNAc...) asparagine). The 43-residue stretch at 866–908 (DIDECSQDPSLCLPHGACKNLQGSYVCVCDEGFTPTQDQHGCE) folds into the EGF-like 9; calcium-binding domain. Positions 917–971 (KECYLNFDDTVFCDSVLATNVTQQECCCSLGAGWGDHCEIYPCPVYSSAEFHSLC) constitute a TB 3 domain. A glycan (N-linked (GlcNAc...) asparagine) is linked at Asn-936. The EGF-like 10; calcium-binding domain occupies 993-1035 (DIDECMLFGSEICKEGKCVNTQPGYECYCKQGFYYDGNLLECV). The EGF-like 11; calcium-binding domain occupies 1036 to 1076 (DVDECLDESNCRNGVCENTRGGYRCACTPPAEYSPAQRQCL). One can recognise an EGF-like 12; calcium-binding domain in the interval 1082 to 1122 (DVDECQDPAACRPGRCVNLPGSYRCECRPPWVPGPSGRDCQ). The 51-residue stretch at 1136–1186 (DVCWSQRGEDGMCAGPLAGPALTFDDCCCRQGRGWGAQCRPCPPRGAGSHC) folds into the TB 4 domain. Over residues 1188-1198 (TSQSESNSFWD) the composition is skewed to polar residues. The interval 1188-1219 (TSQSESNSFWDTSPLLLGKPPRDEDSSEEDSD) is disordered. An EGF-like 13; calcium-binding domain is found at 1254–1298 (DIDECRELNQRGLLCKSERCVNTSGSFRCVCKAGFARSRPHGACV). 2 cysteine pairs are disulfide-bonded: Cys-1258–Cys-1273 and Cys-1268–Cys-1282. Residue Asn-1275 is glycosylated (N-linked (GlcNAc...) asparagine).

The protein belongs to the LTBP family. Forms part of the large latent transforming growth factor beta precursor complex; removal is essential for activation of complex. Interacts with EFEMP2. Contains hydroxylated asparagine residues. In terms of processing, two intrachain disulfide bonds from the TB3 domain are rearranged upon TGFB1 binding, and form interchain bonds with TGFB1 propeptide, anchoring it to the extracellular matrix. As to expression, isoform 2: Expressed prominently in heart, skeletal muscle, prostate, testis, small intestine and ovary. Isoform 1: Strongly expressed in pancreas and liver.

The protein localises to the secreted. The protein resides in the extracellular space. It is found in the extracellular matrix. In terms of biological role, key regulator of transforming growth factor beta (TGFB1, TGFB2 and TGFB3) that controls TGF-beta activation by maintaining it in a latent state during storage in extracellular space. Associates specifically via disulfide bonds with the Latency-associated peptide (LAP), which is the regulatory chain of TGF-beta, and regulates integrin-dependent activation of TGF-beta. The sequence is that of Latent-transforming growth factor beta-binding protein 3 (LTBP3) from Homo sapiens (Human).